The chain runs to 346 residues: Histone PARylation factor 1 (346 aa).

M1 is modified (N-acetylmethionine). Residues K19, K186, and K233 each carry the N6-acetyllysine modification. D235 is subject to PolyADP-ribosyl aspartic acid. Y238 is modified (ADP-ribosyltyrosine). The residue at position 240 (E240) is a PolyADP-ribosyl glutamic acid. The interaction with PARP1 stretch occupies residues 242 to 346 (PETDADLKRI…SEENIDQLAG (105 aa)). The Proton donor role is filled by E284.

Belongs to the HPF1 family. In terms of assembly, interacts with PARP1 (via the PARP catalytic domain). Interacts with PARP2 (via the PARP catalytic domain). Interacts with core nucleosomes in a PARP1- and PARP2-dependent manner.

The protein resides in the chromosome. Its subcellular location is the nucleus. Cofactor for serine ADP-ribosylation that confers serine specificity on PARP1 and PARP2 and plays a key role in DNA damage response. Initiates the repair of double-strand DNA breaks: recruited to DNA damage sites by PARP1 and PARP2 and switches the amino acid specificity of PARP1 and PARP2 from aspartate or glutamate to serine residues, licensing serine ADP-ribosylation of target proteins. Serine ADP-ribosylation of target proteins, such as histones, promotes decompaction of chromatin and the recruitment of repair factors leading to the reparation of DNA strand breaks. Serine ADP-ribosylation of proteins constitutes the primary form of ADP-ribosylation of proteins in response to DNA damage. HPF1 acts by completing the active site of PARP1 and PARP2: forms a composite active site composed of residues from HPF1 and PARP1 or PARP2. While HPF1 promotes the initiation of serine ADP-ribosylation, it restricts the polymerase activity of PARP1 and PARP2 in order to limit the length of poly-ADP-ribose chains. HPF1 also promotes tyrosine ADP-ribosylation, probably by conferring tyrosine specificity on PARP1. The polypeptide is Histone PARylation factor 1 (Mus musculus (Mouse)).